Reading from the N-terminus, the 256-residue chain is Small ribosomal subunit protein eS1 (256 aa).

Alanine 2 carries the post-translational modification N-acetylalanine; partial.

It belongs to the eukaryotic ribosomal protein eS1 family. In terms of assembly, component of the small ribosomal subunit. Mature ribosomes consist of a small (40S) and a large (60S) subunit. The 40S subunit contains about 33 different proteins and 1 molecule of RNA (18S). The 60S subunit contains about 49 different proteins and 3 molecules of RNA (25S, 5.8S and 5S).

It localises to the cytoplasm. This Komagataella phaffii (strain GS115 / ATCC 20864) (Yeast) protein is Small ribosomal subunit protein eS1.